The primary structure comprises 532 residues: 2,3-bisphosphoglycerate-independent phosphoglycerate mutase (532 aa).

Residues aspartate 15 and serine 65 each coordinate Mn(2+). Serine 65 serves as the catalytic Phosphoserine intermediate. Substrate-binding positions include histidine 126, 156–157, arginine 188, arginine 194, 258–261, and lysine 331; these read RD and RPDR. Residues aspartate 398, histidine 402, aspartate 439, histidine 440, and histidine 457 each coordinate Mn(2+).

It belongs to the BPG-independent phosphoglycerate mutase family. As to quaternary structure, monomer. Requires Mn(2+) as cofactor.

The enzyme catalyses (2R)-2-phosphoglycerate = (2R)-3-phosphoglycerate. It functions in the pathway carbohydrate degradation; glycolysis; pyruvate from D-glyceraldehyde 3-phosphate: step 3/5. Functionally, catalyzes the interconversion of 2-phosphoglycerate and 3-phosphoglycerate. The sequence is that of 2,3-bisphosphoglycerate-independent phosphoglycerate mutase from Rippkaea orientalis (strain PCC 8801 / RF-1) (Cyanothece sp. (strain PCC 8801)).